The sequence spans 796 residues: Exocyst complex component 3 (796 aa).

Residues P87 to L174 adopt a coiled-coil conformation.

It belongs to the SEC6 family. In terms of assembly, the exocyst complex is composed of sec-3/exoc1, sec-5/exoc2, sec-6/exoc3, sec-8/exoc4, sec-10/exoc5, sec-15/exoc6, exo-70/exoc7 and exo-84/exoc8.

Its function is as follows. Component of the exocyst complex involved in the docking of exocytic vesicles with fusion sites on the plasma membrane. This Caenorhabditis elegans protein is Exocyst complex component 3 (sec-6).